The primary structure comprises 166 residues: Dynein regulatory complex protein 8 (166 aa).

Residues 95 to 130 (DDYHTLLRAFRAFDPDGRGFIDAESFKSLLTGKGEA) enclose the EF-hand domain.

The protein belongs to the DRC8 family. As to quaternary structure, component of the nexin-dynein regulatory complex (N-DRC).

Its subcellular location is the cytoplasm. The protein localises to the cytoskeleton. It localises to the flagellum axoneme. Its function is as follows. Component of the nexin-dynein regulatory complex (N-DRC), a key regulator of ciliary/flagellar motility which maintains the alignment and integrity of the distal axoneme and regulates microtubule sliding in motile axonemes. The chain is Dynein regulatory complex protein 8 from Chlamydomonas reinhardtii (Chlamydomonas smithii).